A 443-amino-acid chain; its full sequence is Proline--tRNA ligase (443 aa).

This sequence belongs to the class-II aminoacyl-tRNA synthetase family. ProS type 2 subfamily. Homodimer.

The protein resides in the cytoplasm. The catalysed reaction is tRNA(Pro) + L-proline + ATP = L-prolyl-tRNA(Pro) + AMP + diphosphate. Functionally, catalyzes the attachment of proline to tRNA(Pro) in a two-step reaction: proline is first activated by ATP to form Pro-AMP and then transferred to the acceptor end of tRNA(Pro). The polypeptide is Proline--tRNA ligase (Zymomonas mobilis subsp. mobilis (strain ATCC 31821 / ZM4 / CP4)).